Reading from the N-terminus, the 237-residue chain is 2,3-bisphosphoglycerate-dependent phosphoglycerate mutase (237 aa).

Residues 10–17 (RHGESKWN), 23–24 (TG), R62, 89–92 (ERHY), K100, 116–117 (RR), and 185–186 (GN) each bind substrate. H11 functions as the Tele-phosphohistidine intermediate in the catalytic mechanism. E89 (proton donor/acceptor) is an active-site residue.

The protein belongs to the phosphoglycerate mutase family. BPG-dependent PGAM subfamily. In terms of assembly, homodimer.

It catalyses the reaction (2R)-2-phosphoglycerate = (2R)-3-phosphoglycerate. It functions in the pathway carbohydrate degradation; glycolysis; pyruvate from D-glyceraldehyde 3-phosphate: step 3/5. In terms of biological role, catalyzes the interconversion of 2-phosphoglycerate and 3-phosphoglycerate. This is 2,3-bisphosphoglycerate-dependent phosphoglycerate mutase from Baumannia cicadellinicola subsp. Homalodisca coagulata.